A 217-amino-acid polypeptide reads, in one-letter code: Large ribosomal subunit protein uL3 (217 aa).

Belongs to the universal ribosomal protein uL3 family. Part of the 50S ribosomal subunit. Forms a cluster with proteins L14 and L19.

In terms of biological role, one of the primary rRNA binding proteins, it binds directly near the 3'-end of the 23S rRNA, where it nucleates assembly of the 50S subunit. This chain is Large ribosomal subunit protein uL3, found in Mycobacterium bovis (strain ATCC BAA-935 / AF2122/97).